Reading from the N-terminus, the 357-residue chain is UDP-N-acetylglucosamine--N-acetylmuramyl-(pentapeptide) pyrophosphoryl-undecaprenol N-acetylglucosamine transferase (357 aa).

UDP-N-acetyl-alpha-D-glucosamine-binding positions include 15–17 (TGG), Asn124, Arg165, Ser194, and Gln288.

Belongs to the glycosyltransferase 28 family. MurG subfamily.

Its subcellular location is the cell inner membrane. The enzyme catalyses di-trans,octa-cis-undecaprenyl diphospho-N-acetyl-alpha-D-muramoyl-L-alanyl-D-glutamyl-meso-2,6-diaminopimeloyl-D-alanyl-D-alanine + UDP-N-acetyl-alpha-D-glucosamine = di-trans,octa-cis-undecaprenyl diphospho-[N-acetyl-alpha-D-glucosaminyl-(1-&gt;4)]-N-acetyl-alpha-D-muramoyl-L-alanyl-D-glutamyl-meso-2,6-diaminopimeloyl-D-alanyl-D-alanine + UDP + H(+). Its pathway is cell wall biogenesis; peptidoglycan biosynthesis. Cell wall formation. Catalyzes the transfer of a GlcNAc subunit on undecaprenyl-pyrophosphoryl-MurNAc-pentapeptide (lipid intermediate I) to form undecaprenyl-pyrophosphoryl-MurNAc-(pentapeptide)GlcNAc (lipid intermediate II). In Nostoc punctiforme (strain ATCC 29133 / PCC 73102), this protein is UDP-N-acetylglucosamine--N-acetylmuramyl-(pentapeptide) pyrophosphoryl-undecaprenol N-acetylglucosamine transferase.